A 560-amino-acid chain; its full sequence is MSTERTSWTNLSTIQKIALGLGIPASATVAYILYRRYRESREERLTFVGEDDIEIEMRVPQEAVKLIIGRQGANIKQLRKQTGARIDVDTEDVGDERVLLISGFPVQVCKAKAAIHQILTENTPVFEQLSVPQRSVGRIIGRGGETIRSICKASGAKITCDKESEGTLLLSRLIKISGTQKEVAAAKHLILEKVSEDEELRKRIAHSAETRVPRKQPISVRREEVTEPGGAGEAALWKNTNSSMGPATPLEVPLRKGGGDMVVVGPKEGSWEKPNDDSFQNSGAQSSPETSMFEIPSPDFSFHADEYLEVYVSASEHPNHFWIQIIGSRSLQLDKLVSEMTQHYENSLPEDLTVHVGDIVAAPLSTNGSWYRARVLGTLENGNLDLYFVDFGDNGDCALKDLRALRSDFLSLPFQAIECSLARIAPTGEEWEEEALDEFDRLTHCADWKPLVAKISSYVQTGISTWPKIYLYDTSDEKKLDIGLELVRKGYAVELPEDMEENRTVPNMLKDMATETDDSLASILTETKKSPEEMPHTLSCLSLSEAASMSGDDNLEDDLF.

2 consecutive KH domains span residues 52 to 115 (DIEI…KAAI) and 124 to 190 (PVFE…KHLI). Residues lysine 65, lysine 76, lysine 110, lysine 112, lysine 152, lysine 175, lysine 181, lysine 187, and lysine 193 each participate in a glycyl lysine isopeptide (Lys-Gly) (interchain with G-Cter in ubiquitin) cross-link. Residues 211–230 (RVPRKQPISVRREEVTEPGG) are disordered. Residues lysine 256 and lysine 267 each participate in a glycyl lysine isopeptide (Lys-Gly) (interchain with G-Cter in ubiquitin) cross-link. The segment at 268–291 (EGSWEKPNDDSFQNSGAQSSPETS) is disordered. A compositionally biased stretch (polar residues) spans 277-290 (DSFQNSGAQSSPET). At serine 278 the chain carries Phosphoserine. In terms of domain architecture, Tudor spans 353-412 (TVHVGDIVAAPLSTNGSWYRARVLGTLENGNLDLYFVDFGDNGDCALKDLRALRSDFLSL). Glycyl lysine isopeptide (Lys-Gly) (interchain with G-Cter in ubiquitin) cross-links involve residues lysine 479, lysine 510, and lysine 529.

This sequence belongs to the Tdrkh family. Interacts with (symmetrically methylated) PIWIL1, PIWIL2 and PIWIL4. In terms of processing, ubiquitinated by PRKN during mitophagy, leading to its degradation and enhancement of mitophagy. Deubiquitinated by USP30. As to expression, highly expressed in testis, present at lower level in brain. Weakly or not expressed in other tissues (at protein level).

It localises to the cytoplasm. Its subcellular location is the mitochondrion. Functionally, participates in the primary piRNA biogenesis pathway and is required during spermatogenesis to repress transposable elements and prevent their mobilization, which is essential for the germline integrity. The piRNA metabolic process mediates the repression of transposable elements during meiosis by forming complexes composed of piRNAs and Piwi proteins and govern the methylation and subsequent repression of transposons. Required for the final steps of primary piRNA biogenesis by participating in the processing of 31-37 nt intermediates into mature piRNAs. May act in pi-bodies and piP-bodies by transferring piRNA precursors or intermediates to or between these granules. This is Tudor and KH domain-containing protein (Tdrkh) from Mus musculus (Mouse).